The following is a 441-amino-acid chain: EP1-like glycoprotein 3 (441 aa).

Residues 1-22 (MKFSITLALCFTLSIFLIGSQA) form the signal peptide. In terms of domain architecture, Bulb-type lectin spans 29–159 (QFRVVNEGGY…SGKFVWQSFD (131 aa)). Asn-102, Asn-258, and Asn-269 each carry an N-linked (GlcNAc...) asparagine glycan. The WD repeat unit spans residues 254–296 (GSKFNVSTFLSRPKHNATLSFIRLESDGNIRVWSYSTLATSTA). The PAN domain occupies 356-433 (CDPKTFHYFK…SSLVAYVKAP (78 aa)). 2 disulfides stabilise this stretch: Cys-387–Cys-409 and Cys-391–Cys-397.

Phosphorylated on tyrosine.

Its subcellular location is the secreted. The protein localises to the cell wall. May be involved in a cell-to cell programmed cell death (PCD) signaling mechanism. The chain is EP1-like glycoprotein 3 from Arabidopsis thaliana (Mouse-ear cress).